The primary structure comprises 467 residues: Ribulose bisphosphate carboxylase large chain (467 aa).

K5 is modified (N6,N6,N6-trimethyllysine). Substrate-binding residues include N114 and T164. The active-site Proton acceptor is K166. K168 is a substrate binding site. K192, D194, and E195 together coordinate Mg(2+). K192 is modified (N6-carboxylysine). H285 serves as the catalytic Proton acceptor. Residues R286, H318, and S370 each contribute to the substrate site.

It belongs to the RuBisCO large chain family. Type I subfamily. In terms of assembly, heterohexadecamer of 8 large chains and 8 small chains; disulfide-linked. The disulfide link is formed within the large subunit homodimers. Mg(2+) is required as a cofactor. Post-translationally, the disulfide bond which can form in the large chain dimeric partners within the hexadecamer appears to be associated with oxidative stress and protein turnover.

Its subcellular location is the plastid. The protein localises to the chloroplast. The catalysed reaction is 2 (2R)-3-phosphoglycerate + 2 H(+) = D-ribulose 1,5-bisphosphate + CO2 + H2O. The enzyme catalyses D-ribulose 1,5-bisphosphate + O2 = 2-phosphoglycolate + (2R)-3-phosphoglycerate + 2 H(+). Its function is as follows. RuBisCO catalyzes two reactions: the carboxylation of D-ribulose 1,5-bisphosphate, the primary event in carbon dioxide fixation, as well as the oxidative fragmentation of the pentose substrate in the photorespiration process. Both reactions occur simultaneously and in competition at the same active site. The polypeptide is Ribulose bisphosphate carboxylase large chain (Eriodictyon californicum (California yerba santa)).